Consider the following 437-residue polypeptide: Xylose isomerase (437 aa).

Residues H101 and D104 contribute to the active site. Residues E232, E268, H271, D296, D307, D309, and D339 each contribute to the Mg(2+) site.

The protein belongs to the xylose isomerase family. In terms of assembly, homotetramer. Mg(2+) is required as a cofactor.

The protein localises to the cytoplasm. The catalysed reaction is alpha-D-xylose = alpha-D-xylulofuranose. The sequence is that of Xylose isomerase from Actinobacillus succinogenes (strain ATCC 55618 / DSM 22257 / CCUG 43843 / 130Z).